Consider the following 64-residue polypeptide: Large ribosomal subunit protein bL32 (64 aa).

Residues 1–15 (MAVPKRKVSKSRRDS) are compositionally biased toward basic residues. The segment at 1–21 (MAVPKRKVSKSRRDSRRAQTF) is disordered.

The protein belongs to the bacterial ribosomal protein bL32 family.

The polypeptide is Large ribosomal subunit protein bL32 (Symbiobacterium thermophilum (strain DSM 24528 / JCM 14929 / IAM 14863 / T)).